The following is a 316-amino-acid chain: Ribosomal RNA large subunit methyltransferase F (316 aa).

The disordered stretch occupies residues Glu200–Asn222. Residues Lys204–Asn214 are compositionally biased toward polar residues.

It belongs to the methyltransferase superfamily. METTL16/RlmF family.

It is found in the cytoplasm. It catalyses the reaction adenosine(1618) in 23S rRNA + S-adenosyl-L-methionine = N(6)-methyladenosine(1618) in 23S rRNA + S-adenosyl-L-homocysteine + H(+). Specifically methylates the adenine in position 1618 of 23S rRNA. The polypeptide is Ribosomal RNA large subunit methyltransferase F (Flavobacterium johnsoniae (strain ATCC 17061 / DSM 2064 / JCM 8514 / BCRC 14874 / CCUG 350202 / NBRC 14942 / NCIMB 11054 / UW101) (Cytophaga johnsonae)).